Reading from the N-terminus, the 614-residue chain is Nuclear receptor subfamily 1 group D member 1 (614 aa).

A compositionally biased stretch (polar residues) spans 1–12 (MTTLDSNNNTGG). Positions 1–70 (MTTLDSNNNT…TQDPARSFGS (70 aa)) are required for phosphorylation by CSNK1E and cytoplasmic localization. Positions 1–119 (MTTLDSNNNT…SSRVSPSKST (119 aa)) are disordered. The segment at 1–128 (MTTLDSNNNT…TSNITKLNGM (128 aa)) is modulating. A compositionally biased stretch (low complexity) spans 14 to 34 (ITYIGSSGSSPSRTSPESLYS). A compositionally biased stretch (polar residues) spans 35–48 (DNSNGSFQSLTQGC). The segment at 49–284 (PTYFPPSPTG…PPRSPSPEPT (236 aa)) is crucial for activation of GJA1. 2 positions are modified to phosphoserine; by GSK3-beta: S55 and S59. The span at 69–102 (GSIPPSLSDDGSPSSSSSSSSSSSSFYNGSPPGS) shows a compositional bias: low complexity. Residues 129–205 (VLLCKVCGDV…VGMSRDAVRF (77 aa)) constitute a DNA-binding region (nuclear receptor). 2 consecutive NR C4-type zinc fingers follow at residues 132–152 (CKVC…CEGC) and 169–193 (CLKN…FKKC). N6-acetyllysine; by KAT5 occurs at positions 191 and 192. A compositionally biased stretch (polar residues) spans 233–243 (SQCPLETSPTQ). Disordered stretches follow at residues 233-285 (SQCP…EPTV) and 311-345 (PGNF…DNNT). Residues 244–261 (HPTPGPMGPSPPPAPVPS) show a composition bias toward pro residues. T274 is modified (phosphothreonine; by CDK1). One can recognise an NR LBD domain in the interval 284-614 (TVEDVISQVA…KLLSFRVDAQ (331 aa)). The segment covering 311–324 (PGNFNANHASGSPP) has biased composition (polar residues). The residue at position 400 (K400) is an N6-acetyllysine. C418 provides a ligand contact to heme. K591 is subject to N6-acetyllysine. H602 is a binding site for heme.

This sequence belongs to the nuclear hormone receptor family. NR1 subfamily. In terms of assembly, binds DNA as a monomer or a homodimer. Interacts with C1D, NR2E3 and SP1. Interacts with OPHN1 (via C-terminus). Interacts with ZNHIT1. Interacts with PER2; the interaction associates PER2 to BMAL1 promoter region. Interacts with CRY1. Interacts with CCAR2. Interacts with SIAH2. Interacts with CDK1. Interacts with FBXW7. Interacts with HUWE1. Interacts with NR0B2. Interacts with NFIL3. Interacts (via domain NR LBD) with HSP90AA1 and HSP90AB1. Ubiquitinated, leading to its proteasomal degradation. Ubiquitinated by SIAH2; leading to its proteasomal degradation. Ubiquitinated by the SCF(FBXW7) complex when phosphorylated by CDK1 leading to its proteasomal degradation. Rapidly ubiquitinated in response to inflammatory triggers and sumoylation is a prerequisite to its ubiquitination. In terms of processing, sumoylated by UBE2I, desumoylated by SENP1, and sumoylation is a prerequisite to its ubiquitination. Post-translationally, phosphorylated by CSNK1E; phosphorylation enhances its cytoplasmic localization. Undergoes lysosome-mediated degradation in a time-dependent manner in the liver. Widely expressed. Expressed at high levels in the liver, adipose tissue, skeletal muscle and brain. Also expressed in endothelial cells (ECs), vascular smooth muscle cells (VSMCs) and macrophages. Expression oscillates diurnally in the suprachiasmatic nucleus (SCN) of the hypothalamus as well as in peripheral tissues. Expression increases during the differentiation of pre-adipocytes into mature adipocytes. Expressed at high levels in some squamous carcinoma cell lines.

The protein localises to the nucleus. Its subcellular location is the cytoplasm. The protein resides in the cell projection. It is found in the dendrite. It localises to the dendritic spine. Its function is as follows. Transcriptional repressor which coordinates circadian rhythm and metabolic pathways in a heme-dependent manner. Integral component of the complex transcription machinery that governs circadian rhythmicity and forms a critical negative limb of the circadian clock by directly repressing the expression of core clock components BMAL1, CLOCK and CRY1. Also regulates genes involved in metabolic functions, including lipid and bile acid metabolism, adipogenesis, gluconeogenesis and the macrophage inflammatory response. Acts as a receptor for heme which stimulates its interaction with the NCOR1/HDAC3 corepressor complex, enhancing transcriptional repression. Recognizes two classes of DNA response elements within the promoter of its target genes and can bind to DNA as either monomers or homodimers, depending on the nature of the response element. Binds as a monomer to a response element composed of the consensus half-site motif 5'-[A/G]GGTCA-3' preceded by an A/T-rich 5' sequence (RevRE), or as a homodimer to a direct repeat of the core motif spaced by two nucleotides (RevDR-2). Acts as a potent competitive repressor of ROR alpha (RORA) function and regulates the levels of its ligand heme by repressing the expression of PPARGC1A, a potent inducer of heme synthesis. Regulates lipid metabolism by repressing the expression of APOC3 and by influencing the activity of sterol response element binding proteins (SREBPs); represses INSIG2 which interferes with the proteolytic activation of SREBPs which in turn govern the rhythmic expression of enzymes with key functions in sterol and fatty acid synthesis. Regulates gluconeogenesis via repression of G6PC1 and PEPCK and adipocyte differentiation via repression of PPARG. Regulates glucagon release in pancreatic alpha-cells via the AMPK-NAMPT-SIRT1 pathway and the proliferation, glucose-induced insulin secretion and expression of key lipogenic genes in pancreatic-beta cells. Positively regulates bile acid synthesis by increasing hepatic expression of CYP7A1 via repression of NR0B2 and NFIL3 which are negative regulators of CYP7A1. Modulates skeletal muscle oxidative capacity by regulating mitochondrial biogenesis and autophagy; controls mitochondrial biogenesis and respiration by interfering with the STK11-PRKAA1/2-SIRT1-PPARGC1A signaling pathway. Represses the expression of SERPINE1/PAI1, an important modulator of cardiovascular disease and the expression of inflammatory cytokines and chemokines in macrophages. Represses gene expression at a distance in macrophages by inhibiting the transcription of enhancer-derived RNAs (eRNAs). Plays a role in the circadian regulation of body temperature and negatively regulates thermogenic transcriptional programs in brown adipose tissue (BAT); imposes a circadian oscillation in BAT activity, increasing body temperature when awake and depressing thermogenesis during sleep. In concert with NR2E3, regulates transcriptional networks critical for photoreceptor development and function. In addition to its activity as a repressor, can also act as a transcriptional activator. In the ovarian granulosa cells acts as a transcriptional activator of STAR which plays a role in steroid biosynthesis. In collaboration with SP1, activates GJA1 transcription in a heme-independent manner. Represses the transcription of CYP2B10, CYP4A10 and CYP4A14. Represses the transcription of CES2. Represses and regulates the circadian expression of TSHB in a NCOR1-dependent manner. Negatively regulates the protein stability of NR3C1 and influences the time-dependent subcellular distribution of NR3C1, thereby affecting its transcriptional regulatory activity. Plays a critical role in the circadian control of neutrophilic inflammation in the lung; under resting, non-stress conditions, acts as a rhythmic repressor to limit inflammatory activity whereas in the presence of inflammatory triggers undergoes ubiquitin-mediated degradation thereby relieving inhibition of the inflammatory response. Plays a key role in the circadian regulation of microglial activation and neuroinflammation; suppresses microglial activation through the NF-kappaB pathway in the central nervous system. Plays a role in the regulation of the diurnal rhythms of lipid and protein metabolism in the skeletal muscle via transcriptional repression of genes controlling lipid and amino acid metabolism in the muscle. In Homo sapiens (Human), this protein is Nuclear receptor subfamily 1 group D member 1 (NR1D1).